The following is a 264-amino-acid chain: MSQHLFTAFILTALAGLSTGIGSLIAFVTKHTNKTFLSVSLGFSAGVMIYVSMIEIFPTAQTILTKAMDKKSGSWLTVLAFFGGILLIAIIDKLIPSEENPHEIKTIEEEDQKPTKLMRMGLMTAIAIGIHNFPEGLATFISGLQDASIAIPIVIAIAIHNIPEGIAVSVPIYQATGSKKKAFTYSFLSGLAEPLGAIIGWFLLMPIMNNIVYGAIFSAVAGIMVFISLDELLPAAEEYGKHHLAIYGVISGMLIMAVSLLLFI.

The next 5 membrane-spanning stretches (helical) occupy residues 8–28 (AFILTALAGLSTGIGSLIAFV), 36–56 (FLSVSLGFSAGVMIYVSMIEI), 75–95 (WLTVLAFFGGILLIAIIDKLI), 121–141 (GLMTAIAIGIHNFPEGLATFI), and 148–168 (SIAIPIVIAIAIHNIPEGIAV). Asn132 and Glu135 together coordinate Fe(2+). The Zn(2+) site is built by Glu135 and His160. Positions 161, 164, and 193 each coordinate Fe(2+). Glu164 provides a ligand contact to Zn(2+). A run of 3 helical transmembrane segments spans residues 197–217 (AIIGWFLLMPIMNNIVYGAIF), 219–239 (AVAGIMVFISLDELLPAAEEY), and 244–264 (LAIYGVISGMLIMAVSLLLFI).

The protein belongs to the ZIP transporter (TC 2.A.5) family. ZupT subfamily.

The protein localises to the cell membrane. The enzyme catalyses Zn(2+)(in) = Zn(2+)(out). In terms of biological role, mediates zinc uptake. May also transport other divalent cations. The chain is Zinc transporter ZupT from Streptococcus mutans serotype c (strain ATCC 700610 / UA159).